Consider the following 333-residue polypeptide: tRNA(Ile)-lysidine synthase (333 aa).

33 to 38 (SGGADS) is an ATP binding site.

The protein belongs to the tRNA(Ile)-lysidine synthase family.

Its subcellular location is the cytoplasm. The enzyme catalyses cytidine(34) in tRNA(Ile2) + L-lysine + ATP = lysidine(34) in tRNA(Ile2) + AMP + diphosphate + H(+). Functionally, ligates lysine onto the cytidine present at position 34 of the AUA codon-specific tRNA(Ile) that contains the anticodon CAU, in an ATP-dependent manner. Cytidine is converted to lysidine, thus changing the amino acid specificity of the tRNA from methionine to isoleucine. This is tRNA(Ile)-lysidine synthase from Salinispora arenicola (strain CNS-205).